Consider the following 362-residue polypeptide: tRNA-specific 2-thiouridylase MnmA 1 (362 aa).

Residues 29-36 (AMSGGVDS) and methionine 55 each bind ATP. The active-site Nucleophile is the cysteine 109. Cysteines 109 and 201 form a disulfide. Position 133 (glycine 133) interacts with ATP. The tract at residues 151-153 (KDQ) is interaction with tRNA. Catalysis depends on cysteine 201, which acts as the Cysteine persulfide intermediate.

The protein belongs to the MnmA/TRMU family.

It is found in the cytoplasm. It carries out the reaction S-sulfanyl-L-cysteinyl-[protein] + uridine(34) in tRNA + AH2 + ATP = 2-thiouridine(34) in tRNA + L-cysteinyl-[protein] + A + AMP + diphosphate + H(+). Its function is as follows. Catalyzes the 2-thiolation of uridine at the wobble position (U34) of tRNA, leading to the formation of s(2)U34. The polypeptide is tRNA-specific 2-thiouridylase MnmA 1 (Fusobacterium nucleatum subsp. nucleatum (strain ATCC 25586 / DSM 15643 / BCRC 10681 / CIP 101130 / JCM 8532 / KCTC 2640 / LMG 13131 / VPI 4355)).